A 30-amino-acid chain; its full sequence is Photosystem I reaction center subunit XII (30 aa).

Residues 7–29 (VYTVLLIALLASVLAIRLGSTLY) traverse the membrane as a helical segment.

This sequence belongs to the PsaM family.

It is found in the plastid. The protein localises to the chloroplast thylakoid membrane. This Trieres chinensis (Marine centric diatom) protein is Photosystem I reaction center subunit XII.